Here is a 239-residue protein sequence, read N- to C-terminus: MKNKRSQNSPYVTPNNPYTTLEKALGYSFKDKRLLEQALTHKSCKLALNNERLEFLGDAVLGLVIGELLYHKFYQYDEGKLSKLRAAIVSAHGFTKLAKAIALQDYLRVSSSEEISKGREKPSILSSAFEALMAGVYLEAGLAKVRKIIQNLLNRAYKRLDLEHLFMDYKTALQELTQAQFCVIPTYQLLQEKGPDHHKEFEMALYIQDKMYATAKGKSKKEAEQQCAYYALQKLKEAK.

In terms of domain architecture, RNase III spans 18 to 141 (YTTLEKALGY…LMAGVYLEAG (124 aa)). Glutamate 54 is a Mg(2+) binding site. Aspartate 58 is a catalytic residue. Residues serine 127 and glutamate 130 each contribute to the Mg(2+) site. Glutamate 130 is a catalytic residue. The DRBM domain occupies 168–237 (DYKTALQELT…AYYALQKLKE (70 aa)).

The protein belongs to the ribonuclease III family. In terms of assembly, homodimer. Mg(2+) is required as a cofactor.

The protein localises to the cytoplasm. The enzyme catalyses Endonucleolytic cleavage to 5'-phosphomonoester.. Functionally, digests double-stranded RNA. Involved in the processing of primary rRNA transcript to yield the immediate precursors to the large and small rRNAs (23S and 16S). Processes some mRNAs, and tRNAs when they are encoded in the rRNA operon. Processes pre-crRNA and tracrRNA of type II CRISPR loci if present in the organism. This Helicobacter pylori (strain G27) protein is Ribonuclease 3.